Consider the following 216-residue polypeptide: Endoplasmic reticulum vesicle protein 25 (216 aa).

Residues 1-21 (MMVSLKSSLFFMLALLTVVHA) form the signal peptide. Residues 22 to 184 (LNFDIPAKTN…TNESTNERVK (163 aa)) lie on the Lumenal side of the membrane. The region spanning 34–150 (PFCLREYVGE…LEPVEADIRR (117 aa)) is the GOLD domain. A helical membrane pass occupies residues 185–205 (NFAYLTFISLFVLVIWQILYL). Residues 206–216 (RSFFQRKHLIP) are Cytoplasmic-facing.

This sequence belongs to the EMP24/GP25L family.

The protein resides in the endoplasmic reticulum membrane. Its subcellular location is the golgi apparatus membrane. Constituent of COPII-coated endoplasmic reticulum-derived transport vesicles. Required for efficient transport of a subset of secretory proteins to the Golgi. Facilitates retrograde transport from the Golgi to the endoplasmic reticulum. The protein is Endoplasmic reticulum vesicle protein 25 (erv25) of Schizosaccharomyces pombe (strain 972 / ATCC 24843) (Fission yeast).